The chain runs to 217 residues: Large ribosomal subunit protein uL3 (217 aa).

Belongs to the universal ribosomal protein uL3 family. In terms of assembly, part of the 50S ribosomal subunit. Forms a cluster with proteins L14 and L19.

One of the primary rRNA binding proteins, it binds directly near the 3'-end of the 23S rRNA, where it nucleates assembly of the 50S subunit. This Mycobacterium leprae (strain TN) protein is Large ribosomal subunit protein uL3.